An 887-amino-acid polypeptide reads, in one-letter code: Probable alpha/beta-glucosidase agdC (887 aa).

The signal sequence occupies residues 1-17 (MLRSLLLLAPMVGAAVA). Residues asparagine 171, asparagine 293, and asparagine 373 are each glycosylated (N-linked (GlcNAc...) asparagine). Aspartate 422 (nucleophile) is an active-site residue. Residue glutamate 425 is part of the active site. Positions 457 to 483 (PRPLPGFPDDFQPPAASKRSVAKGSKV) are disordered. Aspartate 571 (proton donor) is an active-site residue. 2 N-linked (GlcNAc...) asparagine glycosylation sites follow: asparagine 747 and asparagine 879.

Belongs to the glycosyl hydrolase 31 family.

It localises to the secreted. It catalyses the reaction Hydrolysis of terminal, non-reducing (1-&gt;4)-linked alpha-D-glucose residues with release of alpha-D-glucose.. The enzyme catalyses Hydrolysis of terminal, non-reducing beta-D-glucosyl residues with release of beta-D-glucose.. Its function is as follows. Glucosidase involved in the degradation of cellulosic biomass. Has both alpha- and beta-glucosidase activity. This is Probable alpha/beta-glucosidase agdC (agdC) from Aspergillus clavatus (strain ATCC 1007 / CBS 513.65 / DSM 816 / NCTC 3887 / NRRL 1 / QM 1276 / 107).